We begin with the raw amino-acid sequence, 495 residues long: SH2 domain-containing adapter protein E (495 aa).

Disordered stretches follow at residues Thr51–Lys190, Asp203–Asp233, and Leu256–Gln327. Residue Ser107 is modified to Phosphoserine. The span at Thr135–Ile144 shows a compositional bias: polar residues. Residues Ile148 to Gly157 are compositionally biased toward basic and acidic residues. Residues Pro162–Ser181 show a composition bias toward low complexity. 2 stretches are compositionally biased toward basic and acidic residues: residues Tyr208 to Glu224 and Pro301 to Gln327. The 96-residue stretch at Trp395–Val490 folds into the SH2 domain.

The sequence is that of SH2 domain-containing adapter protein E (SHE) from Homo sapiens (Human).